A 452-amino-acid polypeptide reads, in one-letter code: Phosphoglucosamine mutase (452 aa).

The active-site Phosphoserine intermediate is S105. S105, D244, D246, and D248 together coordinate Mg(2+). A Phosphoserine modification is found at S105.

It belongs to the phosphohexose mutase family. Mg(2+) is required as a cofactor. Post-translationally, activated by phosphorylation.

The enzyme catalyses alpha-D-glucosamine 1-phosphate = D-glucosamine 6-phosphate. Functionally, catalyzes the conversion of glucosamine-6-phosphate to glucosamine-1-phosphate. This chain is Phosphoglucosamine mutase, found in Blochmanniella floridana.